The sequence spans 892 residues: Translation initiation factor IF-2 (892 aa).

Positions 51-296 (REHGSAPNKL…KGKRKPSTLQ (246 aa)) are disordered. Positions 68–82 (STLNIPSTGGKSKSV) are enriched in polar residues. Over residues 99-217 (EQAKAEEQAQ…KMAAENEGKW (119 aa)) the composition is skewed to basic and acidic residues. The segment covering 224 to 237 (QTESADYHVTTSQH) has biased composition (polar residues). Basic and acidic residues predominate over residues 239 to 254 (RAAEDENDAKVEGDRR). Positions 255-269 (SRTRGGKATKQKKGN) are enriched in basic residues. Residues 270-283 (KLSESKADREEARA) are compositionally biased toward basic and acidic residues. Residues 391–560 (HRAPVVTIMG…LLQAEVMELK (170 aa)) enclose the tr-type G domain. Residues 400-407 (GHVDHGKT) are G1. 400–407 (GHVDHGKT) contacts GTP. Residues 425-429 (GITQH) form a G2 region. Positions 446–449 (DTPG) are G3. GTP is bound by residues 446–450 (DTPGH) and 500–503 (NKID). The segment at 500 to 503 (NKID) is G4. Residues 536–538 (SAK) are G5.

Belongs to the TRAFAC class translation factor GTPase superfamily. Classic translation factor GTPase family. IF-2 subfamily.

The protein resides in the cytoplasm. Functionally, one of the essential components for the initiation of protein synthesis. Protects formylmethionyl-tRNA from spontaneous hydrolysis and promotes its binding to the 30S ribosomal subunits. Also involved in the hydrolysis of GTP during the formation of the 70S ribosomal complex. In Yersinia enterocolitica serotype O:8 / biotype 1B (strain NCTC 13174 / 8081), this protein is Translation initiation factor IF-2.